The following is a 201-amino-acid chain: Lipoprotein signal peptidase (201 aa).

3 consecutive transmembrane segments (helical) span residues 33 to 53 (LLLSIAAVVLTLDIVTKVLAV), 86 to 106 (GYTWVLTLIATGVVIGIFWMG), and 110 to 130 (VSSWWALGLGMILGGAMGNLV). Residues Asp146 and Asp160 contribute to the active site. A helical transmembrane segment spans residues 158–178 (VADPSVVVGAILLVVLSIFGF).

The protein belongs to the peptidase A8 family.

It is found in the cell membrane. The enzyme catalyses Release of signal peptides from bacterial membrane prolipoproteins. Hydrolyzes -Xaa-Yaa-Zaa-|-(S,diacylglyceryl)Cys-, in which Xaa is hydrophobic (preferably Leu), and Yaa (Ala or Ser) and Zaa (Gly or Ala) have small, neutral side chains.. The protein operates within protein modification; lipoprotein biosynthesis (signal peptide cleavage). This protein specifically catalyzes the removal of signal peptides from prolipoproteins. The sequence is that of Lipoprotein signal peptidase from Mycobacterium leprae (strain Br4923).